A 482-amino-acid polypeptide reads, in one-letter code: MSKVLTSLPAGERVGIAFSGGLDTSVAVAWMRDKGAVPCTYTADIGQYDEPDIASVPSRASAYGAEITRLVDCRAALVEEGLAALACGAFHIRSGGRPYFNTTPLGRAVTGTLLVRAMLEDGVQIWGDGSTFKGNDIERFYRYGLLANPHLRIYKPWLDADFVTELGGRKEMSEWLLAHGLPYRDSTEKAYSTDANIWGATHEAKTLEHLDTGIETVDPIMGVRFWDPSVEIATEDVTVGFEQGRPVSINGKEFASAVDLVMEANAIGGRHGLGMSDQIENRIIEAKSRGIYEAPGMALLHIVYERLVNAIHNEDTLAAYHNEGRRLGRLMYEGRWLDPQALMIRESLQRWVGTAVTGEVTLRLRRGEDYSILDTTGPAFSYHPDKLSMERTEDSAFGPVDRIGQLTMRNLDIADSRARLEQYVGLGLVGTPHPTPIGAAQAAATGLIGAMDEGGAEAIASRGEATDEETMLDRAAMESGTD.

ATP contacts are provided by residues 17–25 (AFSGGLDTS) and Ala43. Tyr99 provides a ligand contact to L-citrulline. Residues Gly129 and Thr131 each coordinate ATP. L-aspartate-binding residues include Thr131, Asn135, and Asp136. Asn135 is an L-citrulline binding site. Asp136 lines the ATP pocket. L-citrulline-binding residues include Arg139 and Ser192. Asp194 provides a ligand contact to ATP. L-citrulline is bound by residues Thr201, Glu203, and Glu280. The disordered stretch occupies residues 461 to 482 (SRGEATDEETMLDRAAMESGTD).

The protein belongs to the argininosuccinate synthase family. Type 2 subfamily. As to quaternary structure, homotetramer.

It localises to the cytoplasm. The enzyme catalyses L-citrulline + L-aspartate + ATP = 2-(N(omega)-L-arginino)succinate + AMP + diphosphate + H(+). Its pathway is amino-acid biosynthesis; L-arginine biosynthesis; L-arginine from L-ornithine and carbamoyl phosphate: step 2/3. This chain is Argininosuccinate synthase (argG), found in Streptomyces lavendulae.